A 311-amino-acid polypeptide reads, in one-letter code: Olfactory receptor 10G7 (311 aa).

The Extracellular segment spans residues 1-23 (MSNATLLTAFILTGLPHAPGLDA). N-linked (GlcNAc...) asparagine glycosylation is present at N3. Residues 24 to 44 (PLFGIFLVVYVLTVLGNLLIL) traverse the membrane as a helical segment. The Cytoplasmic segment spans residues 45–52 (LVIRVDSH). Residues 53–73 (LHTPMYYFLTNLSFIDMWFST) form a helical membrane-spanning segment. Residues 74 to 98 (VTVPKMLMTLVSPSGRTISFHSCVA) lie on the Extracellular side of the membrane. A disulfide bridge links C96 with C188. A helical membrane pass occupies residues 99–119 (QLYFFHFLGSTECFLYTVMSY). Residues 120–138 (DRYLAISYPLRYTNMMTGR) lie on the Cytoplasmic side of the membrane. A helical membrane pass occupies residues 139 to 159 (SCALLATGTWLSGSLHSAVQT). Residues 160 to 196 (ILTFHLPYCGPNQIQHYFCDAPPILKLACADTSANEM) lie on the Extracellular side of the membrane. A helical transmembrane segment spans residues 197–216 (VIFVNIGLVASGCFVLIVLS). Topologically, residues 217–236 (YVSIVCSILRIRTSEGRHRA) are cytoplasmic. A helical membrane pass occupies residues 237-257 (FQTCASHCIVVLCFFGPGLFI). The Extracellular portion of the chain corresponds to 258–268 (YLRPGSRDALH). A helical membrane pass occupies residues 269–289 (GVVAVFYTTLTPLFNPVVYTL). At 290 to 311 (RNKEVKKALLKLKNGSVFAQGE) the chain is on the cytoplasmic side.

The protein belongs to the G-protein coupled receptor 1 family.

Its subcellular location is the cell membrane. Its function is as follows. Odorant receptor. This is Olfactory receptor 10G7 (OR10G7) from Homo sapiens (Human).